Here is a 540-residue protein sequence, read N- to C-terminus: Maintenance of mitochondrial morphology protein 1 (540 aa).

Residues 1-25 (MAGPSNQTQPPPPVLTQPSLSFTQG) lie on the Lumenal side of the membrane. Residues 26–46 (LLVGQLSVVLLIGAFIKFFIF) traverse the membrane as a helical segment. Residues 47-540 (GEAPPHPSRN…GSMPDPVVVT (494 aa)) lie on the Cytoplasmic side of the membrane. Disordered stretches follow at residues 52 to 135 (HPSR…SHQP), 275 to 331 (GPGT…ATAA), 416 to 471 (GRTG…GGSM), and 509 to 540 (YGGA…VVVT). Composition is skewed to polar residues over residues 69-81 (YSLN…SSPR), 88-105 (STSN…NTRS), and 112-121 (YSATPTNPTS). The segment covering 122 to 132 (KHSRSRPHHSS) has biased composition (basic residues). The region spanning 134 to 409 (QPESLDWFNV…EPRVQVVGLP (276 aa)) is the SMP-LTD domain. A compositionally biased stretch (low complexity) spans 321–331 (TNTNTAGATAA). 2 stretches are compositionally biased toward gly residues: residues 442-471 (TAGG…GGSM) and 511-521 (GAQGGGGGGGR).

Belongs to the MMM1 family. Homodimer. Component of the ER-mitochondria encounter structure (ERMES) or MDM complex, composed of MMM1, MDM10, MDM12 and MDM34. An MMM1 homodimer associates with one molecule of MDM12 on each side in a pairwise head-to-tail manner, and the SMP-LTD domains of MMM1 and MDM12 generate a continuous hydrophobic tunnel for phospholipid trafficking.

The protein localises to the endoplasmic reticulum membrane. In terms of biological role, component of the ERMES/MDM complex, which serves as a molecular tether to connect the endoplasmic reticulum (ER) and mitochondria. Components of this complex are involved in the control of mitochondrial shape and protein biogenesis, and function in nonvesicular lipid trafficking between the ER and mitochondria. The MDM12-MMM1 subcomplex functions in the major beta-barrel assembly pathway that is responsible for biogenesis of all outer membrane beta-barrel proteins, and acts in a late step after the SAM complex. The MDM10-MDM12-MMM1 subcomplex further acts in the TOM40-specific pathway after the action of the MDM12-MMM1 complex. Essential for establishing and maintaining the structure of mitochondria and maintenance of mtDNA nucleoids. In Blastomyces gilchristii (strain SLH14081) (Blastomyces dermatitidis), this protein is Maintenance of mitochondrial morphology protein 1.